Here is a 512-residue protein sequence, read N- to C-terminus: Cytochrome P450 26B1 (512 aa).

A heme-binding site is contributed by C441.

Belongs to the cytochrome P450 family. It depends on heme as a cofactor. Highly expressed in brain, particularly in the cerebellum and pons.

Its subcellular location is the endoplasmic reticulum membrane. It is found in the microsome membrane. It catalyses the reaction all-trans-retinoate + reduced [NADPH--hemoprotein reductase] + O2 = all-trans-4-hydroxyretinoate + oxidized [NADPH--hemoprotein reductase] + H2O + H(+). The enzyme catalyses all-trans-retinoate + reduced [NADPH--hemoprotein reductase] + O2 = all-trans-18-hydroxyretinoate + oxidized [NADPH--hemoprotein reductase] + H2O + H(+). A cytochrome P450 monooxygenase involved in the metabolism of retinoates (RAs), the active metabolites of vitamin A, and critical signaling molecules in animals. RAs exist as at least four different isomers: all-trans-RA (atRA), 9-cis-RA, 13-cis-RA, and 9,13-dicis-RA, where atRA is considered to be the biologically active isomer, although 9-cis-RA and 13-cis-RA also have activity. Catalyzes the hydroxylation of atRA primarily at C-4 and C-18, thereby contributing to the regulation of atRA homeostasis and signaling. Hydroxylation of atRA limits its biological activity and initiates a degradative process leading to its eventual elimination. Involved in the convertion of atRA to all-trans-4-oxo-RA. Can oxidize all-trans-13,14-dihydroretinoate (DRA) to metabolites which could include all-trans-4-oxo-DRA, all-trans-4-hydroxy-DRA, all-trans-5,8-epoxy-DRA, and all-trans-18-hydroxy-DRA. Shows preference for the following substrates: atRA &gt; 9-cis-RA &gt; 13-cis-RA. Plays a central role in germ cell development: acts by degrading RAs in the developing testis, preventing STRA8 expression, thereby leading to delay of meiosis. Required for the maintenance of the undifferentiated state of male germ cells during embryonic development in Sertoli cells, inducing arrest in G0 phase of the cell cycle and preventing meiotic entry. Plays a role in skeletal development, both at the level of patterning and in the ossification of bone and the establishment of some synovial joints. Essential for postnatal survival. In terms of biological role, also has a significant activity in oxidation of tazarotenic acid and may therefore metabolize that xenobiotic in vivo. The chain is Cytochrome P450 26B1 (CYP26B1) from Homo sapiens (Human).